Here is a 443-residue protein sequence, read N- to C-terminus: Phosphoglucosamine mutase (443 aa).

Serine 103 serves as the catalytic Phosphoserine intermediate. Mg(2+) is bound by residues serine 103, aspartate 244, aspartate 246, and aspartate 248. Serine 103 is subject to Phosphoserine.

It belongs to the phosphohexose mutase family. Requires Mg(2+) as cofactor. Activated by phosphorylation.

It carries out the reaction alpha-D-glucosamine 1-phosphate = D-glucosamine 6-phosphate. Its function is as follows. Catalyzes the conversion of glucosamine-6-phosphate to glucosamine-1-phosphate. This is Phosphoglucosamine mutase from Pelagibacter ubique (strain HTCC1062).